Reading from the N-terminus, the 815-residue chain is Ent-sandaracopimara-8(14),15-diene synthase, chloroplastic (815 aa).

The transit peptide at 1 to 38 directs the protein to the chloroplast; the sequence is MLPSSICSMGQIPRTSPHYYGMLPKQMSKGHPPMVTRA. Asp-550, Asp-554, Asn-696, Thr-700, and Glu-704 together coordinate Mg(2+). Residues 550-554 carry the DDXXD motif motif; it reads DDFFD.

Belongs to the terpene synthase family. Mg(2+) serves as cofactor.

Its subcellular location is the plastid. It localises to the chloroplast. It catalyses the reaction ent-copalyl diphosphate = ent-sandaracopimara-8(14),15-diene + diphosphate. It carries out the reaction 9alpha-copalyl diphosphate = (12E)-9alpha-labda-8(17),12,14-triene + diphosphate. In terms of biological role, involved in the biosynthesis of oryzalexin A-F phytoalexins. Catalyzes the conversion of ent-copalyl diphosphate to the phytoalexin precursor ent-sandaracopimaradiene. This chain is Ent-sandaracopimara-8(14),15-diene synthase, chloroplastic, found in Oryza sativa subsp. japonica (Rice).